A 290-amino-acid chain; its full sequence is ATP synthase subunit a (290 aa).

The next 6 membrane-spanning stretches (helical) occupy residues 44–64 (AFHV…ILLF), 104–124 (VIAP…AIDL), 161–181 (LSVF…GGFI), 194–214 (ILVQ…TLVA), 233–253 (VFIL…GMGV), and 260–280 (AVFH…LTIV).

Belongs to the ATPase A chain family. In terms of assembly, F-type ATPases have 2 components, CF(1) - the catalytic core - and CF(0) - the membrane proton channel. CF(1) has five subunits: alpha(3), beta(3), gamma(1), delta(1), epsilon(1). CF(0) has three main subunits: a(1), b(2) and c(9-12). The alpha and beta chains form an alternating ring which encloses part of the gamma chain. CF(1) is attached to CF(0) by a central stalk formed by the gamma and epsilon chains, while a peripheral stalk is formed by the delta and b chains.

The protein resides in the cell inner membrane. In terms of biological role, key component of the proton channel; it plays a direct role in the translocation of protons across the membrane. This is ATP synthase subunit a from Pseudomonas fluorescens (strain ATCC BAA-477 / NRRL B-23932 / Pf-5).